The primary structure comprises 168 residues: Photosystem I assembly protein Ycf3 (168 aa).

3 TPR repeats span residues alanine 35–proline 68, serine 72–leucine 105, and glycine 120–asparagine 153.

It belongs to the Ycf3 family.

The protein localises to the plastid. It localises to the chloroplast thylakoid membrane. In terms of biological role, essential for the assembly of the photosystem I (PSI) complex. May act as a chaperone-like factor to guide the assembly of the PSI subunits. The protein is Photosystem I assembly protein Ycf3 of Chloranthus spicatus (Chulantree).